Reading from the N-terminus, the 463-residue chain is Cysteine--tRNA ligase (463 aa).

Position 29 (C29) interacts with Zn(2+). A 'HIGH' region motif is present at residues 31 to 41 (MTIYDLCHIGH). Zn(2+)-binding residues include C218, H243, and E247. A 'KMSKS' region motif is present at residues 275-279 (KMSKS). K278 provides a ligand contact to ATP.

It belongs to the class-I aminoacyl-tRNA synthetase family. As to quaternary structure, monomer. The cofactor is Zn(2+).

The protein localises to the cytoplasm. It carries out the reaction tRNA(Cys) + L-cysteine + ATP = L-cysteinyl-tRNA(Cys) + AMP + diphosphate. The polypeptide is Cysteine--tRNA ligase (Polaromonas naphthalenivorans (strain CJ2)).